The following is a 151-amino-acid chain: Leukocyte cell-derived chemotaxin-2 (151 aa).

The N-terminal stretch at 1–18 (MFSTKALLLAGLISTALA) is a signal peptide. 3 disulfides stabilise this stretch: Cys-25–Cys-60, Cys-36–Cys-41, and Cys-99–Cys-142. The Zn(2+) site is built by His-53, Asp-57, and His-138.

The protein belongs to the LECT2/MIM-1 family. As to quaternary structure, interacts with MET. In terms of tissue distribution, highly expressed in adult and fetal liver and weakly in testis. Not expressed in bone marrow.

It localises to the cytoplasm. The protein resides in the secreted. Has a neutrophil chemotactic activity. Also a positive regulator of chondrocyte proliferation. Does not show metalloendopeptidase activity. The protein is Leukocyte cell-derived chemotaxin-2 (LECT2) of Homo sapiens (Human).